Consider the following 579-residue polypeptide: Fatty-acid amide hydrolase 1 (579 aa).

The chain crosses the membrane as a helical span at residues 9–29 (AFSGPSGVALACCLVAAALAL). Residues 30–403 (RWSSRRMARG…GDYVDSCLGD (374 aa)) lie on the Cytoplasmic side of the membrane. Catalysis depends on K142, which acts as the Charge relay system. Substrate is bound by residues M191, S217, and 238–241 (IGGS). The active-site Charge relay system is the S217. S241 acts as the Acyl-ester intermediate in catalysis. S241 carries the post-translational modification Phosphoserine. An intramembrane segment occupies 404 to 433 (LISILRLPKWLKGLLAFMLRPLLPRLAGFL). Residues 434 to 579 (SSLRPRSAGK…RLMAPGRQPS (146 aa)) are Cytoplasmic-facing.

This sequence belongs to the amidase family. As to quaternary structure, homodimer.

The protein localises to the endoplasmic reticulum membrane. Its subcellular location is the golgi apparatus membrane. It carries out the reaction N-(5Z,8Z,11Z,14Z-eicosatetraenoyl)-ethanolamine + H2O = ethanolamine + (5Z,8Z,11Z,14Z)-eicosatetraenoate. The enzyme catalyses (9Z)-octadecenamide + H2O = (9Z)-octadecenoate + NH4(+). The catalysed reaction is 2-(5Z,8Z,11Z,14Z-eicosatetraenoyl)-glycerol + H2O = glycerol + (5Z,8Z,11Z,14Z)-eicosatetraenoate + H(+). It catalyses the reaction 1-O-methyl-(5Z,8Z,11Z,14Z)-eicosatetraenoate + H2O = methanol + (5Z,8Z,11Z,14Z)-eicosatetraenoate + H(+). It carries out the reaction (9Z,12Z,15Z)-octadecatrienamide + H2O = (9Z,12Z,15Z)-octadecatrienoate + NH4(+). The enzyme catalyses (5Z,8Z,11Z,14Z)-eicosatetraenamide + H2O = (5Z,8Z,11Z,14Z)-eicosatetraenoate + NH4(+). The catalysed reaction is (6Z)-octadecenamide + H2O = (6Z)-octadecenoate + NH4(+). It catalyses the reaction (15Z)-tetracosenamide + H2O = (15Z)-tetracosenoate + NH4(+). It carries out the reaction (8Z,11Z,14Z)-eicosatrienamide + H2O = (8Z,11Z,14Z)-eicosatrienoate + NH4(+). The enzyme catalyses (11Z,14Z,17Z)-eicosatrienamide + H2O = (11Z,14Z,17Z)-eicosatrienoate + NH4(+). The catalysed reaction is (11Z,14Z)-eicosadienamide + H2O = (11Z,14Z)-eicosadienoate + NH4(+). It catalyses the reaction (9Z,12Z)-octadecadienamide + H2O = (9Z,12Z)-octadecadienoate + NH4(+). It carries out the reaction tetradecamide + H2O = tetradecanoate + NH4(+). The enzyme catalyses N-(9Z-octadecenoyl) ethanolamine + H2O = ethanolamine + (9Z)-octadecenoate. The catalysed reaction is N-(9Z-octadecenoyl)-taurine + H2O = taurine + (9Z)-octadecenoate. It catalyses the reaction (11Z)-eicosenamide + H2O = (11Z)-eicosenoate + NH4(+). It carries out the reaction N-(9Z-hexadecenoyl) ethanolamine + H2O = (9Z)-hexadecenoate + ethanolamine. The enzyme catalyses N-octadecanoyl ethanolamine + H2O = octadecanoate + ethanolamine. The catalysed reaction is N-docosanoyl-ethanolamine + H2O = docosanoate + ethanolamine. It catalyses the reaction N-tetracosanoyl-taurine + H2O = tetracosanoate + taurine. It carries out the reaction N-(15Z-tetracosenoyl)-ethanolamine + H2O = (15Z)-tetracosenoate + ethanolamine. The enzyme catalyses N-docosanoyl-taurine + H2O = docosanoate + taurine. The catalysed reaction is N-(15Z-tetracosenoyl)-taurine + H2O = (15Z)-tetracosenoate + taurine. It catalyses the reaction N-tricosanoyl-taurine + H2O = tricosanoate + taurine. It carries out the reaction (9Z)-octadecenoate + glycine = N-(9Z-octadecenoyl)glycine + H2O. The enzyme catalyses N-(5Z,8Z,11Z,14Z)-eicosatetraenoyl-glycine + H2O = (5Z,8Z,11Z,14Z)-eicosatetraenoate + glycine. The catalysed reaction is N-(5Z,8Z,11Z,14Z-eicosatetraenoyl)-L-serine + H2O = (5Z,8Z,11Z,14Z)-eicosatetraenoate + L-serine. Inhibited by trifluoromethyl ketone. Functionally, catalyzes the hydrolysis of endogenous amidated lipids like the sleep-inducing lipid oleamide ((9Z)-octadecenamide), the endocannabinoid anandamide (N-(5Z,8Z,11Z,14Z-eicosatetraenoyl)-ethanolamine), as well as other fatty amides, to their corresponding fatty acids, thereby regulating the signaling functions of these molecules. Also catalyzes the hydrolysis of the endocannabinoid 2-arachidonoylglycerol (2-(5Z,8Z,11Z,14Z-eicosatetraenoyl)-glycerol). FAAH cooperates with PM20D1 in the hydrolysis of amino acid-conjugated fatty acids such as N-fatty acyl glycine and N-fatty acyl-L-serine, thereby acting as a physiological regulator of specific subsets of intracellular, but not of extracellular, N-fatty acyl amino acids. This Sus scrofa (Pig) protein is Fatty-acid amide hydrolase 1 (FAAH).